The following is a 153-amino-acid chain: Small heat shock protein HspB (153 aa).

Residues 30-140 (AGTEDNYPPC…KPRRISISGS (111 aa)) enclose the sHSP domain.

This sequence belongs to the small heat shock protein (HSP20) family.

The chain is Small heat shock protein HspB (hspB) from Bradyrhizobium diazoefficiens (strain JCM 10833 / BCRC 13528 / IAM 13628 / NBRC 14792 / USDA 110).